An 82-amino-acid chain; its full sequence is Small ribosomal subunit protein bS16 (82 aa).

It belongs to the bacterial ribosomal protein bS16 family.

This chain is Small ribosomal subunit protein bS16, found in Klebsiella pneumoniae (strain 342).